A 190-amino-acid chain; its full sequence is uncharacterized protein (190 aa).

2 disordered regions span residues 1–21 (MALR…ATVG) and 155–190 (PEMG…TQAS). Residues 181–190 (SPSSHPTQAS) are compositionally biased toward low complexity.

This is an uncharacterized protein from Homo sapiens (Human).